Consider the following 158-residue polypeptide: Transcription elongation factor GreA (158 aa).

A coiled-coil region spans residues 47 to 74; sequence AEYHAAKEEQSHNEGRINELEDKLARAD.

Belongs to the GreA/GreB family.

Necessary for efficient RNA polymerase transcription elongation past template-encoded arresting sites. The arresting sites in DNA have the property of trapping a certain fraction of elongating RNA polymerases that pass through, resulting in locked ternary complexes. Cleavage of the nascent transcript by cleavage factors such as GreA or GreB allows the resumption of elongation from the new 3'terminus. GreA releases sequences of 2 to 3 nucleotides. The chain is Transcription elongation factor GreA from Rhodopseudomonas palustris (strain ATCC BAA-98 / CGA009).